We begin with the raw amino-acid sequence, 428 residues long: Succinyl-CoA--L-malate CoA-transferase alpha subunit (428 aa).

The tract at residues 1–31 (MPPTGEEPSGHAESKPPASDPMSTPGTGQEQ) is disordered. Polar residues predominate over residues 21–31 (PMSTPGTGQEQ). Asp-200 (nucleophile) is an active-site residue.

Belongs to the CoA-transferase III family. Forms a large complex composed of six heterodimers (alpha, beta).

It carries out the reaction succinyl-CoA + (S)-malate = (S)-malyl-CoA + succinate. The enzyme catalyses (3S)-citramalate + succinyl-CoA = (3S)-citramalyl-CoA + succinate. Its function is as follows. Involved in the 3-hydroxypropionate cycle used for autotrophic carbon dioxide fixation. Catalyzes the transfer of CoA moiety from succinyl-CoA to L-malate to yield L-malyl-CoA. It is highly specific for succinyl-CoA as the CoA donor, however it can accept L-citramalate instead of L-malate as the CoA acceptor. This Chloroflexus aurantiacus protein is Succinyl-CoA--L-malate CoA-transferase alpha subunit (smtA).